Here is a 130-residue protein sequence, read N- to C-terminus: MMTVDPIQDLRNICLQILQSVNSNTLLEEETWDYNTLINNIDLPKQTREALRRSASQYLLYCQRKNKTYTTRKPLPAKAKLQLVETFSKKRYLTRCEKHQLAVQCGITTNQVQIWFANRRKRSKDLNNRD.

The segment at residues 68–127 (TYTTRKPLPAKAKLQLVETFSKKRYLTRCEKHQLAVQCGITTNQVQIWFANRRKRSKDLN) is a DNA-binding region (homeobox).

This sequence belongs to the MATA1 family.

It is found in the nucleus. Mating type proteins are sequence specific DNA-binding proteins that act as master switches in yeast differentiation by controlling gene expression in a cell type-specific fashion. The polypeptide is Mating-type-like protein A1 (MTL1A1) (Candida glabrata (strain ATCC 2001 / BCRC 20586 / JCM 3761 / NBRC 0622 / NRRL Y-65 / CBS 138) (Yeast)).